The sequence spans 92 residues: Putative septation protein SpoVG (92 aa).

The protein belongs to the SpoVG family.

Its function is as follows. Could be involved in septation. In Clostridium botulinum (strain Eklund 17B / Type B), this protein is Putative septation protein SpoVG.